Consider the following 174-residue polypeptide: Shikimate kinase 2 (174 aa).

ATP is bound at residue 12–17 (GCGKTT). Positions 16 and 32 each coordinate Mg(2+). 3 residues coordinate substrate: D34, R58, and G79. The segment at 112-126 (QAAPEEDLRPTLTGK) is LID domain. Residue R120 coordinates ATP. Residue R139 participates in substrate binding.

Belongs to the shikimate kinase family. AroL subfamily. Monomer. Requires Mg(2+) as cofactor.

It localises to the cytoplasm. The enzyme catalyses shikimate + ATP = 3-phosphoshikimate + ADP + H(+). It functions in the pathway metabolic intermediate biosynthesis; chorismate biosynthesis; chorismate from D-erythrose 4-phosphate and phosphoenolpyruvate: step 5/7. Its function is as follows. Catalyzes the specific phosphorylation of the 3-hydroxyl group of shikimic acid using ATP as a cosubstrate. This Escherichia coli O7:K1 (strain IAI39 / ExPEC) protein is Shikimate kinase 2.